A 185-amino-acid chain; its full sequence is Ribonuclease M5 1 (185 aa).

Residues 4 to 87 enclose the Toprim domain; the sequence is KEVIVVEGKD…AFLTKHDAAP (84 aa). Positions 10, 56, and 58 each coordinate Mg(2+).

The protein belongs to the ribonuclease M5 family. Mg(2+) is required as a cofactor.

The protein resides in the cytoplasm. It catalyses the reaction Endonucleolytic cleavage of RNA, removing 21 and 42 nucleotides, respectively, from the 5'- and 3'-termini of a 5S-rRNA precursor.. Functionally, required for correct processing of both the 5' and 3' ends of 5S rRNA precursor. Cleaves both sides of a double-stranded region yielding mature 5S rRNA in one step. The polypeptide is Ribonuclease M5 1 (Ligilactobacillus salivarius (strain UCC118) (Lactobacillus salivarius)).